The sequence spans 185 residues: Acireductone dioxygenase (185 aa).

Fe(2+)-binding residues include histidine 96, histidine 98, glutamate 102, and histidine 140. Ni(2+)-binding residues include histidine 96, histidine 98, glutamate 102, and histidine 140.

Belongs to the acireductone dioxygenase (ARD) family. As to quaternary structure, monomer. Fe(2+) serves as cofactor. The cofactor is Ni(2+).

It carries out the reaction 1,2-dihydroxy-5-(methylsulfanyl)pent-1-en-3-one + O2 = 3-(methylsulfanyl)propanoate + CO + formate + 2 H(+). The enzyme catalyses 1,2-dihydroxy-5-(methylsulfanyl)pent-1-en-3-one + O2 = 4-methylsulfanyl-2-oxobutanoate + formate + 2 H(+). The protein operates within amino-acid biosynthesis; L-methionine biosynthesis via salvage pathway; L-methionine from S-methyl-5-thio-alpha-D-ribose 1-phosphate: step 5/6. Functionally, catalyzes 2 different reactions between oxygen and the acireductone 1,2-dihydroxy-3-keto-5-methylthiopentene (DHK-MTPene) depending upon the metal bound in the active site. Fe-containing acireductone dioxygenase (Fe-ARD) produces formate and 2-keto-4-methylthiobutyrate (KMTB), the alpha-ketoacid precursor of methionine in the methionine recycle pathway. Ni-containing acireductone dioxygenase (Ni-ARD) produces methylthiopropionate, carbon monoxide and formate, and does not lie on the methionine recycle pathway. This is Acireductone dioxygenase from Hahella chejuensis (strain KCTC 2396).